Reading from the N-terminus, the 252-residue chain is RNA-binding protein 2 (252 aa).

Disordered stretches follow at residues 1–34 (MADGFWNRQQQHLPPPGGMLKRPRTEYDTAPSGV) and 232–252 (RLQFSRSPGRRSGGPGPRGKR). In terms of domain architecture, RRM spans 152 to 238 (STLYVEGLPS…SYLRLQFSRS (87 aa)). Over residues 242-252 (RSGGPGPRGKR) the composition is skewed to gly residues.

In terms of biological role, probable RNA-binding protein. The sequence is that of RNA-binding protein 2 from Medicago truncatula (Barrel medic).